Here is a 225-residue protein sequence, read N- to C-terminus: Uridylate kinase (225 aa).

9-10 (GS) contributes to the ATP binding site. Gly43 contributes to the UMP binding site. ATP-binding residues include Gly44 and Arg48. Residues Asp65 and 113–119 (TEPAHST) each bind UMP. ATP-binding residues include Thr139, Tyr145, and Asp148.

It belongs to the UMP kinase family. In terms of assembly, homohexamer.

Its subcellular location is the cytoplasm. It carries out the reaction UMP + ATP = UDP + ADP. The protein operates within pyrimidine metabolism; CTP biosynthesis via de novo pathway; UDP from UMP (UMPK route): step 1/1. Inhibited by UTP. In terms of biological role, catalyzes the reversible phosphorylation of UMP to UDP. The polypeptide is Uridylate kinase (Methanobrevibacter smithii (strain ATCC 35061 / DSM 861 / OCM 144 / PS)).